Reading from the N-terminus, the 447-residue chain is Chromosomal replication initiator protein DnaA (447 aa).

The domain I, interacts with DnaA modulators stretch occupies residues 1 to 74 (MENIEELWSA…MLLEVTGSEL (74 aa)). Residues 74–108 (LNTKFIIPDSLEEIEEQKPMPKPKQSTDTGDSPKS) are domain II. Positions 85 to 107 (EEIEEQKPMPKPKQSTDTGDSPK) are disordered. Residues 97-107 (KQSTDTGDSPK) are compositionally biased toward polar residues. Residues 109–325 (MLNSKYTFDT…GALIRVVAYS (217 aa)) are domain III, AAA+ region. The ATP site is built by Gly153, Gly155, Lys156, and Thr157. Residues 326–447 (SLVNQDIDAS…EELKEKLKSI (122 aa)) are domain IV, binds dsDNA.

The protein belongs to the DnaA family. As to quaternary structure, oligomerizes as a right-handed, spiral filament on DNA at oriC.

It localises to the cytoplasm. In terms of biological role, plays an essential role in the initiation and regulation of chromosomal replication. ATP-DnaA binds to the origin of replication (oriC) to initiate formation of the DNA replication initiation complex once per cell cycle. Binds the DnaA box (a 9 base pair repeat at the origin) and separates the double-stranded (ds)DNA. Forms a right-handed helical filament on oriC DNA; dsDNA binds to the exterior of the filament while single-stranded (ss)DNA is stabiized in the filament's interior. The ATP-DnaA-oriC complex binds and stabilizes one strand of the AT-rich DNA unwinding element (DUE), permitting loading of DNA polymerase. After initiation quickly degrades to an ADP-DnaA complex that is not apt for DNA replication. Binds acidic phospholipids. This Oceanobacillus iheyensis (strain DSM 14371 / CIP 107618 / JCM 11309 / KCTC 3954 / HTE831) protein is Chromosomal replication initiator protein DnaA.